Consider the following 626-residue polypeptide: Colicin-Ia (626 aa).

Positions 23–225 are translocation (T); it reads EIMAVDIYVN…TRLSELEKNG (203 aa). Over residues 276-286 the composition is skewed to polar residues; sequence QQLTQQKNTPD. Residues 276–308 form a disordered region; the sequence is QQLTQQKNTPDGKTIVSPEKFPGRSSTNHSIVV. The segment at 282–385 is receptor-binding (R); it reads KNTPDGKTIV…LRQRLLDARN (104 aa). Residues 450-626 are channel (C); the sequence is KDAINFTTEF…VEKANKFWGI (177 aa). Transmembrane regions (helical) follow at residues 580–594 and 597–612; these read ATALVALVFSILTGS and GIIGYGLLMAVTGALI.

This sequence belongs to the channel forming colicin family.

It is found in the cell membrane. Its function is as follows. This colicin is a channel-forming colicin. This class of transmembrane toxins depolarize the cytoplasmic membrane, leading to dissipation of cellular energy. In terms of biological role, colicins are polypeptide toxins produced by and active against E.coli and closely related bacteria. This is Colicin-Ia (cia) from Escherichia coli.